We begin with the raw amino-acid sequence, 548 residues long: Kinetochore and Eb1-associated basic protein (548 aa).

2 disordered regions span residues 1-51 (MSSM…PKHP) and 82-181 (YRSS…IRPK). Basic and acidic residues-rich tracts occupy residues 20 to 29 (RTKELLERQR), 104 to 116 (RTWE…EFRS), and 127 to 141 (PRPR…DLRS). The important for kinetochore and microtubule localization stretch occupies residues 100–253 (QNRQRTWEGP…TTSKRKLDFK (154 aa)). Residues 144 to 155 (QGTPATKIPSQR) show a composition bias toward polar residues. The SXIP motif 1 signature appears at 149–152 (TKIP). Basic and acidic residues predominate over residues 156-165 (NPKENQELSK). The span at 166–175 (SHTCIPSSEP) shows a compositional bias: polar residues. The SXIP motif 2 motif lies at 168 to 171 (TCIP). The segment at 237–372 (SDKGIKLTTS…MCALPVVSEK (136 aa)) is CH (calponin-homology)-like region, which is not required for kinetochore and microtubule localization. The stretch at 386-457 (YDVMSLQQKF…LQLQRLRLQE (72 aa)) forms a coiled coil.

As to quaternary structure, interacts with Eb1 via the two SxIP motifs; the interaction is not required for kebab kinetochore localization.

Its subcellular location is the cytoplasm. It localises to the perinuclear region. The protein resides in the chromosome. The protein localises to the centromere. It is found in the kinetochore. Its subcellular location is the cytoskeleton. It localises to the spindle. The protein is Kinetochore and Eb1-associated basic protein of Drosophila melanogaster (Fruit fly).